Consider the following 548-residue polypeptide: Probable thiamine biosynthetic bifunctional enzyme, chloroplastic (548 aa).

The segment covering Met-1–His-10 has biased composition (polar residues). The interval Met-1–Arg-40 is disordered. A chloroplast-targeting transit peptide spans Met-1 to Ser-47. A compositionally biased stretch (low complexity) spans Pro-11–Pro-28. 4-amino-2-methyl-5-(diphosphooxymethyl)pyrimidine contacts are provided by residues Gln-372–Lys-376 and Asn-404. Residues Asp-405 and Asp-424 each contribute to the Mg(2+) site. Ser-443 is a binding site for 4-amino-2-methyl-5-(diphosphooxymethyl)pyrimidine. Thr-469–Thr-471 contacts 2-[(2R,5Z)-2-carboxy-4-methylthiazol-5(2H)-ylidene]ethyl phosphate. Lys-472 is a 4-amino-2-methyl-5-(diphosphooxymethyl)pyrimidine binding site. 2-[(2R,5Z)-2-carboxy-4-methylthiazol-5(2H)-ylidene]ethyl phosphate-binding positions include Gly-499 and Val-522–Ser-523.

Belongs to the thiamine-phosphate synthase family. It depends on Mg(2+) as a cofactor.

The protein localises to the plastid. The protein resides in the chloroplast. It catalyses the reaction 2-[(2R,5Z)-2-carboxy-4-methylthiazol-5(2H)-ylidene]ethyl phosphate + 4-amino-2-methyl-5-(diphosphooxymethyl)pyrimidine + 2 H(+) = thiamine phosphate + CO2 + diphosphate. The catalysed reaction is 2-(2-carboxy-4-methylthiazol-5-yl)ethyl phosphate + 4-amino-2-methyl-5-(diphosphooxymethyl)pyrimidine + 2 H(+) = thiamine phosphate + CO2 + diphosphate. The enzyme catalyses 4-methyl-5-(2-phosphooxyethyl)-thiazole + 4-amino-2-methyl-5-(diphosphooxymethyl)pyrimidine + H(+) = thiamine phosphate + diphosphate. It carries out the reaction 4-amino-5-hydroxymethyl-2-methylpyrimidine + ATP = 4-amino-2-methyl-5-(phosphooxymethyl)pyrimidine + ADP + H(+). It functions in the pathway cofactor biosynthesis; thiamine diphosphate biosynthesis; thiamine phosphate from 4-amino-2-methyl-5-diphosphomethylpyrimidine and 4-methyl-5-(2-phosphoethyl)-thiazole: step 1/1. Its pathway is cofactor biosynthesis; thiamine diphosphate biosynthesis; 4-amino-2-methyl-5-diphosphomethylpyrimidine from 5-amino-1-(5-phospho-D-ribosyl)imidazole: step 2/3. Essential for thiamine biosynthesis. Bifunctional enzyme that catalyzes the phosphorylation of hydroxymethylpyrimidine phosphate (HMP-P) to HMP-PP and condenses 4-methyl-5-(beta-hydroxyethyl)thiazole monophosphate (THZ-P) and 2-methyl-4-amino-5-hydroxymethyl pyrimidine pyrophosphate (HMP-PP) to form thiamine monophosphate (TMP). This chain is Probable thiamine biosynthetic bifunctional enzyme, chloroplastic, found in Oryza sativa subsp. japonica (Rice).